The chain runs to 213 residues: Small ribosomal subunit protein uS3 (213 aa).

In terms of domain architecture, KH type-2 spans 38–106 (IRAFVKKLLY…EFSLEVNEIR (69 aa)).

Belongs to the universal ribosomal protein uS3 family. Part of the 30S ribosomal subunit. Forms a tight complex with proteins S10 and S14.

Functionally, binds the lower part of the 30S subunit head. Binds mRNA in the 70S ribosome, positioning it for translation. This chain is Small ribosomal subunit protein uS3, found in Desulfovibrio desulfuricans (strain ATCC 27774 / DSM 6949 / MB).